We begin with the raw amino-acid sequence, 205 residues long: Imidazole glycerol phosphate synthase subunit HisH (205 aa).

The Glutamine amidotransferase type-1 domain maps to 3–205 (KIGLIDYGMG…LLRRWLSNIQ (203 aa)). Cys81 acts as the Nucleophile in catalysis. Residues His185 and Glu187 contribute to the active site.

As to quaternary structure, heterodimer of HisH and HisF.

It is found in the cytoplasm. The catalysed reaction is 5-[(5-phospho-1-deoxy-D-ribulos-1-ylimino)methylamino]-1-(5-phospho-beta-D-ribosyl)imidazole-4-carboxamide + L-glutamine = D-erythro-1-(imidazol-4-yl)glycerol 3-phosphate + 5-amino-1-(5-phospho-beta-D-ribosyl)imidazole-4-carboxamide + L-glutamate + H(+). The enzyme catalyses L-glutamine + H2O = L-glutamate + NH4(+). The protein operates within amino-acid biosynthesis; L-histidine biosynthesis; L-histidine from 5-phospho-alpha-D-ribose 1-diphosphate: step 5/9. Functionally, IGPS catalyzes the conversion of PRFAR and glutamine to IGP, AICAR and glutamate. The HisH subunit catalyzes the hydrolysis of glutamine to glutamate and ammonia as part of the synthesis of IGP and AICAR. The resulting ammonia molecule is channeled to the active site of HisF. The protein is Imidazole glycerol phosphate synthase subunit HisH of Prochlorococcus marinus (strain MIT 9312).